The chain runs to 112 residues: Urease subunit gamma (112 aa).

The protein belongs to the urease gamma subunit family. In terms of assembly, heterotrimer of UreA (gamma), UreB (beta) and UreC (alpha) subunits. Three heterotrimers associate to form the active enzyme.

It is found in the cytoplasm. It carries out the reaction urea + 2 H2O + H(+) = hydrogencarbonate + 2 NH4(+). Its pathway is nitrogen metabolism; urea degradation; CO(2) and NH(3) from urea (urease route): step 1/1. In Gloeothece citriformis (strain PCC 7424) (Cyanothece sp. (strain PCC 7424)), this protein is Urease subunit gamma.